A 171-amino-acid chain; its full sequence is uncharacterized protein (171 aa).

This is an uncharacterized protein from Encephalitozoon cuniculi (strain GB-M1) (Microsporidian parasite).